The following is a 295-amino-acid chain: Ribosomal RNA small subunit methyltransferase A (295 aa).

S-adenosyl-L-methionine contacts are provided by Asn29, Leu31, Gly56, Glu77, Asp102, and Asn127.

The protein belongs to the class I-like SAM-binding methyltransferase superfamily. rRNA adenine N(6)-methyltransferase family. RsmA subfamily.

The protein localises to the cytoplasm. The enzyme catalyses adenosine(1518)/adenosine(1519) in 16S rRNA + 4 S-adenosyl-L-methionine = N(6)-dimethyladenosine(1518)/N(6)-dimethyladenosine(1519) in 16S rRNA + 4 S-adenosyl-L-homocysteine + 4 H(+). Its function is as follows. Specifically dimethylates two adjacent adenosines (A1518 and A1519) in the loop of a conserved hairpin near the 3'-end of 16S rRNA in the 30S particle. May play a critical role in biogenesis of 30S subunits. This chain is Ribosomal RNA small subunit methyltransferase A, found in Anoxybacillus flavithermus (strain DSM 21510 / WK1).